The primary structure comprises 443 residues: Exodeoxyribonuclease 7 large subunit (443 aa).

The protein belongs to the XseA family. In terms of assembly, heterooligomer composed of large and small subunits.

The protein localises to the cytoplasm. The catalysed reaction is Exonucleolytic cleavage in either 5'- to 3'- or 3'- to 5'-direction to yield nucleoside 5'-phosphates.. Its function is as follows. Bidirectionally degrades single-stranded DNA into large acid-insoluble oligonucleotides, which are then degraded further into small acid-soluble oligonucleotides. The protein is Exodeoxyribonuclease 7 large subunit of Vibrio vulnificus (strain YJ016).